Here is a 160-residue protein sequence, read N- to C-terminus: Triabin (160 aa).

The signal sequence occupies residues 1-18 (MKTIIAVTIFGILTCAYA). Cystine bridges form between Cys24–Cys128, Cys57–Cys160, and Cys87–Cys102.

The protein belongs to the calycin superfamily. Triabin family. In terms of tissue distribution, expressed in salivary glands.

It is found in the secreted. In terms of biological role, thrombin inhibitor. Forms a non-covalent complex with thrombin at a molar ratio of 1:1. Inhibits thrombin-induced platelet aggregation. Prolongs thrombin clotting time and activated partial thromboplastin time. It only minimally suppresses the amidolytic activity of thrombin. Inhibits thrombin-mediated fibrin formation in the host. Inhibits thrombin-induced endothelium-dependent relaxant and contractile responses in host blood vessels. Inhibits thrombin-induced mitogenesis in host vascular smooth muscle cells. The sequence is that of Triabin from Meccus pallidipennis (Triatomine bug).